Consider the following 293-residue polypeptide: Ribosomal RNA small subunit methyltransferase H (293 aa).

S-adenosyl-L-methionine contacts are provided by residues 32 to 34 (GGH), D51, F78, D99, and Q106. The segment at 272-293 (SDEEIKENPASRSAKLRVGRRI) is disordered.

This sequence belongs to the methyltransferase superfamily. RsmH family.

The protein localises to the cytoplasm. The enzyme catalyses cytidine(1402) in 16S rRNA + S-adenosyl-L-methionine = N(4)-methylcytidine(1402) in 16S rRNA + S-adenosyl-L-homocysteine + H(+). Functionally, specifically methylates the N4 position of cytidine in position 1402 (C1402) of 16S rRNA. This chain is Ribosomal RNA small subunit methyltransferase H, found in Sulfurihydrogenibium sp. (strain YO3AOP1).